We begin with the raw amino-acid sequence, 541 residues long: Peptidyl-prolyl isomerase cwc-27 (541 aa).

The 183-residue stretch at 11-193 folds into the PPIase cyclophilin-type domain; the sequence is PTASAIIHTT…YPIKITRIEI (183 aa). 2 disordered regions span residues 199–443 and 513–541; these read DDMQ…GQAD and TLKEEKKATRDAKTGGSSRAWDRGRRDRH. Basic and acidic residues-rich tracts occupy residues 279-307, 316-348, and 361-374; these read AKRDAKPVANDVPKREEKPEPKPVKESRR, QKKEQPPKKHYSEHSSPEPEEPKKKSLLEKTNE, and IHSEPVKQEKKKSA. Residues 432 to 442 show a composition bias toward acidic residues; that stretch reads DVEDGEQDGQA. Composition is skewed to basic and acidic residues over residues 513 to 525 and 532 to 541; these read TLKEEKKATRDAK and AWDRGRRDRH.

This sequence belongs to the cyclophilin-type PPIase family. CWC27 subfamily. As to quaternary structure, associated with the spliceosome.

The protein resides in the cytoplasm. The protein localises to the nucleus. It carries out the reaction [protein]-peptidylproline (omega=180) = [protein]-peptidylproline (omega=0). In terms of biological role, PPIases accelerate the folding of proteins. It catalyzes the cis-trans isomerization of proline imidic peptide bonds in oligopeptides. Involved in pre-mRNA splicing. This chain is Peptidyl-prolyl isomerase cwc-27 (cwc-27), found in Neurospora crassa (strain ATCC 24698 / 74-OR23-1A / CBS 708.71 / DSM 1257 / FGSC 987).